Reading from the N-terminus, the 466-residue chain is Glutamate--tRNA ligase (466 aa).

The short motif at 10–20 (PSPTGYLHIGG) is the 'HIGH' region element. A 'KMSKS' region motif is present at residues 237–241 (RLSKR). Residue lysine 240 participates in ATP binding.

The protein belongs to the class-I aminoacyl-tRNA synthetase family. Glutamate--tRNA ligase type 1 subfamily. As to quaternary structure, monomer.

Its subcellular location is the cytoplasm. It catalyses the reaction tRNA(Glu) + L-glutamate + ATP = L-glutamyl-tRNA(Glu) + AMP + diphosphate. Its function is as follows. Catalyzes the attachment of glutamate to tRNA(Glu) in a two-step reaction: glutamate is first activated by ATP to form Glu-AMP and then transferred to the acceptor end of tRNA(Glu). In Syntrophotalea carbinolica (strain DSM 2380 / NBRC 103641 / GraBd1) (Pelobacter carbinolicus), this protein is Glutamate--tRNA ligase.